The following is a 390-amino-acid chain: Nicotinate phosphoribosyltransferase (390 aa).

At His211 the chain carries Phosphohistidine; by autocatalysis.

Belongs to the NAPRTase family. In terms of processing, transiently phosphorylated on a His residue during the reaction cycle. Phosphorylation strongly increases the affinity for substrates and increases the rate of nicotinate D-ribonucleotide production. Dephosphorylation regenerates the low-affinity form of the enzyme, leading to product release.

The enzyme catalyses nicotinate + 5-phospho-alpha-D-ribose 1-diphosphate + ATP + H2O = nicotinate beta-D-ribonucleotide + ADP + phosphate + diphosphate. It participates in cofactor biosynthesis; NAD(+) biosynthesis; nicotinate D-ribonucleotide from nicotinate: step 1/1. Its function is as follows. Catalyzes the synthesis of beta-nicotinate D-ribonucleotide from nicotinate and 5-phospho-D-ribose 1-phosphate at the expense of ATP. This is Nicotinate phosphoribosyltransferase from Chromohalobacter salexigens (strain ATCC BAA-138 / DSM 3043 / CIP 106854 / NCIMB 13768 / 1H11).